The sequence spans 461 residues: Chromosomal replication initiator protein DnaA (461 aa).

Positions 1–90 are domain I, interacts with DnaA modulators; it reads MAVSLWQQCI…RPSARPVAPA (90 aa). The tract at residues 91–124 is domain II; the sequence is PVAAKPVNRQTKAQVGTTSFNTQAEPIINPNHRS. Residues 125-341 are domain III, AAA+ region; sequence NINPTYQFDN…GALNRVIANA (217 aa). G169, G171, K172, and T173 together coordinate ATP. The domain IV, binds dsDNA stretch occupies residues 342–461; sequence NFTGRPITID…YANLIRTLSS (120 aa).

It belongs to the DnaA family. Oligomerizes as a right-handed, spiral filament on DNA at oriC.

It localises to the cytoplasm. In terms of biological role, plays an essential role in the initiation and regulation of chromosomal replication. ATP-DnaA binds to the origin of replication (oriC) to initiate formation of the DNA replication initiation complex once per cell cycle. Binds the DnaA box (a 9 base pair repeat at the origin) and separates the double-stranded (ds)DNA. Forms a right-handed helical filament on oriC DNA; dsDNA binds to the exterior of the filament while single-stranded (ss)DNA is stabiized in the filament's interior. The ATP-DnaA-oriC complex binds and stabilizes one strand of the AT-rich DNA unwinding element (DUE), permitting loading of DNA polymerase. After initiation quickly degrades to an ADP-DnaA complex that is not apt for DNA replication. Binds acidic phospholipids. This Shewanella frigidimarina (strain NCIMB 400) protein is Chromosomal replication initiator protein DnaA.